A 622-amino-acid polypeptide reads, in one-letter code: ABC transporter permease protein YxdM (622 aa).

The next 10 membrane-spanning stretches (helical) occupy residues 20–40, 56–76, 118–138, 154–174, 195–215, 219–239, 279–299, 498–518, 558–578, and 590–610; these read AFFL…MFLF, GLTA…LYSV, AGII…AYIL, ITAC…ILFV, PSVL…GMVL, VHGA…YFFF, LFFI…VLAM, TVQL…VFFV, IQLA…TLFA, and VAGP…LFFL.

This sequence belongs to the ABC-4 integral membrane protein family. In terms of assembly, the complex is composed of two ATP-binding proteins (YxdL) and two transmembrane proteins (YxdM).

Its subcellular location is the cell membrane. Functionally, part of the ABC transporter complex YxdLM which could be involved in peptide resistance. The polypeptide is ABC transporter permease protein YxdM (yxdM) (Bacillus subtilis (strain 168)).